A 161-amino-acid polypeptide reads, in one-letter code: Regulatory protein RecX (161 aa).

This sequence belongs to the RecX family.

The protein resides in the cytoplasm. Modulates RecA activity. This Thermotoga petrophila (strain ATCC BAA-488 / DSM 13995 / JCM 10881 / RKU-1) protein is Regulatory protein RecX.